A 303-amino-acid polypeptide reads, in one-letter code: UDP-3-O-acyl-N-acetylglucosamine deacetylase (303 aa).

Positions 78, 237, and 241 each coordinate Zn(2+). Catalysis depends on His264, which acts as the Proton donor.

This sequence belongs to the LpxC family. Zn(2+) serves as cofactor.

It carries out the reaction a UDP-3-O-[(3R)-3-hydroxyacyl]-N-acetyl-alpha-D-glucosamine + H2O = a UDP-3-O-[(3R)-3-hydroxyacyl]-alpha-D-glucosamine + acetate. It participates in glycolipid biosynthesis; lipid IV(A) biosynthesis; lipid IV(A) from (3R)-3-hydroxytetradecanoyl-[acyl-carrier-protein] and UDP-N-acetyl-alpha-D-glucosamine: step 2/6. Its function is as follows. Catalyzes the hydrolysis of UDP-3-O-myristoyl-N-acetylglucosamine to form UDP-3-O-myristoylglucosamine and acetate, the committed step in lipid A biosynthesis. This chain is UDP-3-O-acyl-N-acetylglucosamine deacetylase, found in Xanthomonas campestris pv. campestris (strain 8004).